The chain runs to 377 residues: Nitric oxide reductase FlRd-NAD(+) reductase (377 aa).

The protein belongs to the FAD-dependent oxidoreductase family. The cofactor is FAD.

It localises to the cytoplasm. The enzyme catalyses 2 reduced [nitric oxide reductase rubredoxin domain] + NAD(+) + H(+) = 2 oxidized [nitric oxide reductase rubredoxin domain] + NADH. Its pathway is nitrogen metabolism; nitric oxide reduction. Its function is as follows. One of at least two accessory proteins for anaerobic nitric oxide (NO) reductase. Reduces the rubredoxin moiety of NO reductase. This is Nitric oxide reductase FlRd-NAD(+) reductase from Escherichia coli (strain SE11).